The primary structure comprises 304 residues: Murein tetrapeptide carboxypeptidase (304 aa).

The Nucleophile role is filled by S106. Residues E200 and H270 each act as charge relay system in the active site.

It belongs to the peptidase S66 family.

It localises to the cytoplasm. The enzyme catalyses N-acetyl-D-glucosaminyl-N-acetylmuramoyl-L-alanyl-meso-2,6-diaminoheptanedioyl-D-alanine + H2O = N-acetyl-D-glucosaminyl-N-acetylmuramoyl-L-alanyl-meso-2,6-diaminoheptanedioate + D-alanine. Its pathway is cell wall biogenesis; peptidoglycan recycling. Its function is as follows. Releases the terminal D-alanine residue from the cytoplasmic tetrapeptide recycling product L-Ala-gamma-D-Glu-meso-Dap-D-Ala. Can also cleave D-Ala from murein derivatives containing the tetrapeptide, i.e. MurNAc-tetrapeptide, UDP-MurNAc-tetrapeptide, GlcNAc-MurNAc-tetrapeptide, and GlcNAc-anhMurNAc-tetrapeptide. Does not act on murein sacculi or cross-linked muropeptides. The tripeptides produced by the LcdA reaction can then be reused as peptidoglycan building blocks; LcdA is thereby involved in murein recycling. The polypeptide is Murein tetrapeptide carboxypeptidase (ldcA) (Escherichia coli O6:H1 (strain CFT073 / ATCC 700928 / UPEC)).